The chain runs to 189 residues: MGVQRCQGPILPWSQRPSQGCFRHGEGVRAWLGACEGALQTHPAGREPLPIGALHVGQVAVYHKFVVERLGRVAFGTELTFGSFMAGRAVDTFEGIQLGREENGFGGVCIRTAGDADGFALHKPGQIRLIRVKNKFSAMFFDAFLTFGFHEFVSTLGDKEAVRVPVDRLYGPVLERSASVLFVEESSPL.

This is an uncharacterized protein from Human adenovirus B serotype 7 (HAdV-7).